The following is a 621-amino-acid chain: Archaeal Lon protease (621 aa).

Topologically, residues 1-117 (MNEEVREILG…YKEEAMKKAQ (117 aa)) are cytoplasmic. Residue 54–61 (GSPGTGKS) coordinates ATP. A helical membrane pass occupies residues 118–136 (ARNFLIFTLVFLVIGYTVL). The Extracellular portion of the chain corresponds to 137–141 (TNPGN). A helical membrane pass occupies residues 142 to 160 (LIWGIIAAVLILMMSRYFI). The Cytoplasmic portion of the chain corresponds to 161–621 (PREDRNVPKL…KFKELELAAV (461 aa)). In terms of domain architecture, Lon proteolytic spans 423–602 (GYEVGRVNGL…NEVLEHVLED (180 aa)). Residues S509 and K552 contribute to the active site.

This sequence belongs to the peptidase S16 family. Archaeal LonB subfamily. In terms of assembly, homohexamer. Organized in a ring with a central cavity.

The protein localises to the cell membrane. Its function is as follows. ATP-dependent serine protease that mediates the selective degradation of mutant and abnormal proteins as well as certain short-lived regulatory proteins. Degrades polypeptides processively. The polypeptide is Archaeal Lon protease (Archaeoglobus fulgidus (strain ATCC 49558 / DSM 4304 / JCM 9628 / NBRC 100126 / VC-16)).